Reading from the N-terminus, the 224-residue chain is Phosphoribosylformylglycinamidine synthase subunit PurQ (224 aa).

Residues 2 to 224 (KVTILQFPGT…IKMLQGFLRA (223 aa)) form the Glutamine amidotransferase type-1 domain. Cysteine 86 functions as the Nucleophile in the catalytic mechanism. Catalysis depends on residues histidine 200 and glutamate 202.

As to quaternary structure, part of the FGAM synthase complex composed of 1 PurL, 1 PurQ and 2 PurS subunits.

It is found in the cytoplasm. It catalyses the reaction N(2)-formyl-N(1)-(5-phospho-beta-D-ribosyl)glycinamide + L-glutamine + ATP + H2O = 2-formamido-N(1)-(5-O-phospho-beta-D-ribosyl)acetamidine + L-glutamate + ADP + phosphate + H(+). The catalysed reaction is L-glutamine + H2O = L-glutamate + NH4(+). The protein operates within purine metabolism; IMP biosynthesis via de novo pathway; 5-amino-1-(5-phospho-D-ribosyl)imidazole from N(2)-formyl-N(1)-(5-phospho-D-ribosyl)glycinamide: step 1/2. Functionally, part of the phosphoribosylformylglycinamidine synthase complex involved in the purines biosynthetic pathway. Catalyzes the ATP-dependent conversion of formylglycinamide ribonucleotide (FGAR) and glutamine to yield formylglycinamidine ribonucleotide (FGAM) and glutamate. The FGAM synthase complex is composed of three subunits. PurQ produces an ammonia molecule by converting glutamine to glutamate. PurL transfers the ammonia molecule to FGAR to form FGAM in an ATP-dependent manner. PurS interacts with PurQ and PurL and is thought to assist in the transfer of the ammonia molecule from PurQ to PurL. This is Phosphoribosylformylglycinamidine synthase subunit PurQ from Sulfurimonas denitrificans (strain ATCC 33889 / DSM 1251) (Thiomicrospira denitrificans (strain ATCC 33889 / DSM 1251)).